The sequence spans 243 residues: Protein canopy homolog 3 (243 aa).

The first 15 residues, 1–15 (MWFLFLLLPLWAGCA), serve as a signal peptide directing secretion. The Saposin B-type domain occupies 27-236 (SKCEVCKYVA…KEEKKQMDQP (210 aa)). Disulfide bonds link C29/C188, C32/C176, and C86/C148. The stretch at 136-160 (ETSAEVADMKKQCDVMMENYEEVIE) forms a coiled coil. The disordered stretch occupies residues 186 to 243 (QSCLSEQGDSRKGDTGPSTGTKKQKKQGEKKNKSKKQNSGSKEEKKQMDQPMAAKEEL). The span at 226–243 (SKEEKKQMDQPMAAKEEL) shows a compositional bias: basic and acidic residues.

This sequence belongs to the canopy family.

Its subcellular location is the endoplasmic reticulum. Its function is as follows. Toll-like receptor (TLR)-specific co-chaperone for HSP90B1. Required for proper TLR folding and hence controls TLR exit from the endoplasmic reticulum. Consequently, required for immune responses. In Xenopus laevis (African clawed frog), this protein is Protein canopy homolog 3 (cnpy3).